A 391-amino-acid polypeptide reads, in one-letter code: Alanine racemase, biosynthetic (391 aa).

Lys-52 (proton acceptor; specific for D-alanine) is an active-site residue. Lys-52 bears the N6-(pyridoxal phosphate)lysine mark. Residue Arg-149 participates in substrate binding. The Proton acceptor; specific for L-alanine role is filled by Tyr-271. Met-330 is a binding site for substrate.

Belongs to the alanine racemase family. Pyridoxal 5'-phosphate serves as cofactor.

It carries out the reaction L-alanine = D-alanine. Its pathway is amino-acid biosynthesis; D-alanine biosynthesis; D-alanine from L-alanine: step 1/1. It functions in the pathway cell wall biogenesis; peptidoglycan biosynthesis. Functionally, catalyzes the interconversion of L-alanine and D-alanine. Provides the D-alanine required for cell wall biosynthesis. This Agrobacterium fabrum (strain C58 / ATCC 33970) (Agrobacterium tumefaciens (strain C58)) protein is Alanine racemase, biosynthetic (alr).